The chain runs to 147 residues: Hemoglobin subunit gamma-2 (147 aa).

Positions 3–147 (HFTEEDKATI…VASALSSRYH (145 aa)) constitute a Globin domain. Thr13 bears the Phosphothreonine mark. Residues Ser45, Ser51, and Ser53 each carry the phosphoserine modification. An N6-acetyllysine modification is found at Lys60. Heme b is bound at residue His64. Lys83 is modified (N6-acetyllysine). His93 serves as a coordination point for heme b. Cys94 is subject to S-nitrosocysteine. Residues Ser140, Ser143, and Ser144 each carry the phosphoserine modification.

This sequence belongs to the globin family. Heterotetramer of two alpha chains and two gamma chains in fetal hemoglobin (Hb F). As to expression, red blood cells.

Its function is as follows. Gamma chains make up the fetal hemoglobin F, in combination with alpha chains. This Gorilla gorilla gorilla (Western lowland gorilla) protein is Hemoglobin subunit gamma-2 (HBG2).